Here is a 451-residue protein sequence, read N- to C-terminus: Chromosomal replication initiator protein DnaA (451 aa).

The interval 1 to 72 (MQSIEDIWQE…ANILQEITGR (72 aa)) is domain I, interacts with DnaA modulators. The segment at 72–108 (RLFDVRFIDGEQEENFEYTVIKPNPALDEDGVEIGKH) is domain II. A domain III, AAA+ region region spans residues 109-325 (MLNPRYVFDT…GALIRVVAYS (217 aa)). ATP contacts are provided by Gly-153, Gly-155, Lys-156, and Thr-157. The domain IV, binds dsDNA stretch occupies residues 326-451 (SLVNKDITAG…KNLRKAQNMF (126 aa)).

This sequence belongs to the DnaA family. Oligomerizes as a right-handed, spiral filament on DNA at oriC.

The protein localises to the cytoplasm. Its function is as follows. Plays an essential role in the initiation and regulation of chromosomal replication. ATP-DnaA binds to the origin of replication (oriC) to initiate formation of the DNA replication initiation complex once per cell cycle. Binds the DnaA box (a 9 base pair repeat at the origin) and separates the double-stranded (ds)DNA. Forms a right-handed helical filament on oriC DNA; dsDNA binds to the exterior of the filament while single-stranded (ss)DNA is stabiized in the filament's interior. The ATP-DnaA-oriC complex binds and stabilizes one strand of the AT-rich DNA unwinding element (DUE), permitting loading of DNA polymerase. After initiation quickly degrades to an ADP-DnaA complex that is not apt for DNA replication. Binds acidic phospholipids. The sequence is that of Chromosomal replication initiator protein DnaA from Listeria monocytogenes serotype 4b (strain CLIP80459).